Consider the following 328-residue polypeptide: NADH-cytochrome b5 reductase-like protein (328 aa).

The region spanning 76–184 (DKWLEFKLQD…KGPVEKFKYS (109 aa)) is the FAD-binding FR-type domain. A Phosphothreonine modification is found at Thr201.

The protein belongs to the flavoprotein pyridine nucleotide cytochrome reductase family. The cofactor is FAD.

It is found in the mitochondrion. It carries out the reaction 2 Fe(III)-[cytochrome b5] + NADH = 2 Fe(II)-[cytochrome b5] + NAD(+) + H(+). In terms of biological role, desaturation and elongation of fatty acids. This Arabidopsis thaliana (Mouse-ear cress) protein is NADH-cytochrome b5 reductase-like protein (CBR2).